The chain runs to 582 residues: MSEAALVPPALSTNQTEETFNFQQYELLRQDRAAHLGPGITDLASLKERIRSYYAIESLADHLNSHAEYRSITLQFPDDLLFDSALVAEELQALLPDLQCARTDAPAQADTTCSCGTQKTCADSKDSADGRKIWILADTAYSPCCVDEVAAEHVQADVVVHFGDTCLNPVETLPVVYIFGEPYLDRAKVISLFTERYDKDAKVCLMANAPYSRHLESLSGELSQLGYSNLVFTDVALPDTPNAAATILGVSDSHPISHKLYASGDRVYYGAKEQLLCEEQLQSFELFHIGLPPDPRLLFLSTKFQGVTAYDTQKRQIAKGPFPAMMRRYRFMHVARTASTIGILVNTLSLKSTRSLISSLVELIRSCGKKHYMFVVGKPNVAKLANFEPVDVWCVLGCGHGGIVLDHANEFYKPIVTPYELTLALAPELSWTGAWVVDFNTVIDGISADLGLQAGAIPAENVPEFDAVTGKYVGNSRPLRELNHLEIESPQESITTGSTELVKKFSGALTIGSTVSTSAQFLQARQWTGLGSDFNAEDSYEEEGATVEEGLSGVARGYQYDVSNAEHTDADVPKTSGRVMNT.

Residues C145, C166, and C398 each coordinate [4Fe-4S] cluster.

The protein belongs to the DPH1/DPH2 family. DPH2 subfamily. As to quaternary structure, component of the 2-(3-amino-3-carboxypropyl)histidine synthase complex composed of DPH1, DPH2, DPH3 and a NADH-dependent reductase, predominantly CBR1. [4Fe-4S] cluster serves as cofactor.

Its subcellular location is the cytoplasm. It participates in protein modification; peptidyl-diphthamide biosynthesis. Its function is as follows. Required for the first step of diphthamide biosynthesis, a post-translational modification of histidine which occurs in elongation factor 2. DPH1 and DPH2 transfer a 3-amino-3-carboxypropyl (ACP) group from S-adenosyl-L-methionine (SAM) to a histidine residue, the reaction is assisted by a reduction system comprising DPH3 and a NADH-dependent reductase, predominantly CBR1. Facilitates the reduction of the catalytic iron-sulfur cluster found in the DPH1 subunit. The polypeptide is 2-(3-amino-3-carboxypropyl)histidine synthase subunit 2 (DPH2) (Eremothecium gossypii (strain ATCC 10895 / CBS 109.51 / FGSC 9923 / NRRL Y-1056) (Yeast)).